Here is an 80-residue protein sequence, read N- to C-terminus: Pigment-dispersing hormone type 2 (80 aa).

The N-terminal stretch at 1–23 (MARCFVVLAFLALAAMSLQVATA) is a signal peptide. Ala-77 bears the Alanine amide mark.

This sequence belongs to the arthropod PDH family. In terms of tissue distribution, eyestalk.

The protein localises to the secreted. Its function is as follows. The pigment-dispersing hormone causes the migration of the distal retinal pigment into the proximal end of the pigment chromatophore cells and thus decreases the amount of light entering the retinulas. May also function as a neurotransmitter and/or neuromodulator. This Penaeus vannamei (Whiteleg shrimp) protein is Pigment-dispersing hormone type 2 (PDH2).